The chain runs to 59 residues: Cortexin domain-containing 1 protein (59 aa).

Residues 17 to 37 (LTLACFVFLCLFLVVMIIRCA) form a helical membrane-spanning segment.

The protein localises to the membrane. The protein is Cortexin domain-containing 1 protein of Homo sapiens (Human).